The sequence spans 250 residues: Cellulose biosynthesis protein BcsQ (250 aa).

Residue 9 to 16 (VRGGVGTT) participates in ATP binding.

The protein belongs to the BcsQ family.

Its subcellular location is the cytoplasm. Functionally, essential for cellulose biosynthesis, shown for strain 1094, a commensal, natural cellulose producer. Also shown in strain W3110 which has a restored reading frame (TAG stop codon to TTG for amino acid 6, called strain AR3110), this protein. May play a role in subcellular localization of an active cellulose biosynthesis apparatus at the bacterial cell pole. The combination of cellulose and the curli fiber network confer cohesion, elasticity and tissue-like properties to colonies. This Escherichia coli (strain K12) protein is Cellulose biosynthesis protein BcsQ.